A 221-amino-acid chain; its full sequence is Ras-related protein Rab-27A (221 aa).

At serine 2 the chain carries N-acetylserine. Phosphoserine is present on serine 2. Position 16-24 (16-24 (GDSGVGKTS)) interacts with GTP. The Effector region motif lies at 38 to 46 (FITTVGIDF). GTP contacts are provided by residues 74 to 78 (DTAGQ), 133 to 136 (NKSD), and 163 to 165 (SAA). A disulfide bridge connects residues cysteine 123 and cysteine 188. S-geranylgeranyl cysteine attachment occurs at residues cysteine 219 and cysteine 221. At cysteine 221 the chain carries Cysteine methyl ester.

Belongs to the small GTPase superfamily. Rab family. As to quaternary structure, binds SYTL1, SYTL2, SLAC2B, MYRIP, SYTL3, SYTL4, SYTL5 and MLPH. Interacts with UNC13D. Interacts with RPH3A and RPH3A. Does not interact with the BLOC-3 complex (heterodimer of HPS1 and HPS4). Interacts (GDP-bound form preferentially) with DENND10. As to expression, detected in melanocytes. Expressed abundantly in the stomach and is predominantly localized at the apical region of gastric-surface mucus cells. Also expressed in the thymus and lung.

Its subcellular location is the membrane. It is found in the melanosome. It localises to the late endosome. The protein resides in the lysosome. It carries out the reaction GTP + H2O = GDP + phosphate + H(+). Regulated by guanine nucleotide exchange factors (GEFs) which promote the exchange of bound GDP for free GTP, GTPase activating proteins (GAPs) which increase the GTP hydrolysis activity, and GDP dissociation inhibitors which inhibit the dissociation of the nucleotide from the GTPase. Activated by GEFs such as DENND10. Functionally, small GTPase which cycles between active GTP-bound and inactive GDP-bound states. In its active state, binds to a variety of effector proteins to regulate homeostasis of late endocytic pathway, including endosomal positioning, maturation and secretion. Plays a role in cytotoxic granule exocytosis in lymphocytes. Required for both granule maturation and granule docking and priming at the immunologic synapse. This Mus musculus (Mouse) protein is Ras-related protein Rab-27A (Rab27a).